Consider the following 129-residue polypeptide: Small ribosomal subunit protein uS9 (129 aa).

It belongs to the universal ribosomal protein uS9 family.

The protein is Small ribosomal subunit protein uS9 of Wolinella succinogenes (strain ATCC 29543 / DSM 1740 / CCUG 13145 / JCM 31913 / LMG 7466 / NCTC 11488 / FDC 602W) (Vibrio succinogenes).